Reading from the N-terminus, the 632-residue chain is Chaperone protein HtpG (632 aa).

The tract at residues 1–339 (MAHETMSFQA…SADLPLNVSR (339 aa)) is a; substrate-binding. Residues 340-559 (EILQESRDVK…DNDMSGYLQR (220 aa)) form a b region. The tract at residues 560-632 (MLKAAGQNAP…TNALLLSRAA (73 aa)) is c.

The protein belongs to the heat shock protein 90 family. Homodimer.

Its subcellular location is the cytoplasm. In terms of biological role, molecular chaperone. Has ATPase activity. The chain is Chaperone protein HtpG from Burkholderia lata (strain ATCC 17760 / DSM 23089 / LMG 22485 / NCIMB 9086 / R18194 / 383).